The sequence spans 268 residues: Tryptophan synthase alpha chain (268 aa).

Residues glutamate 49 and aspartate 60 each act as proton acceptor in the active site.

Belongs to the TrpA family. Tetramer of two alpha and two beta chains.

It catalyses the reaction (1S,2R)-1-C-(indol-3-yl)glycerol 3-phosphate + L-serine = D-glyceraldehyde 3-phosphate + L-tryptophan + H2O. It functions in the pathway amino-acid biosynthesis; L-tryptophan biosynthesis; L-tryptophan from chorismate: step 5/5. Functionally, the alpha subunit is responsible for the aldol cleavage of indoleglycerol phosphate to indole and glyceraldehyde 3-phosphate. This Pseudomonas aeruginosa (strain ATCC 15692 / DSM 22644 / CIP 104116 / JCM 14847 / LMG 12228 / 1C / PRS 101 / PAO1) protein is Tryptophan synthase alpha chain.